A 906-amino-acid polypeptide reads, in one-letter code: Protein translocase subunit SecA (906 aa).

Residues Gln-86, 104–108 (GEGKT), and Asp-511 contribute to the ATP site. 2 stretches are compositionally biased toward basic and acidic residues: residues 853-865 (HESV…RHDE) and 877-888 (VRREGPKVKRND). The disordered stretch occupies residues 853 to 906 (HESVIDNNQRHDEDEQEEAPKVQQVRREGPKVKRNDPCPCGSGKKYKQCHSKVE). 4 residues coordinate Zn(2+): Cys-890, Cys-892, Cys-901, and His-902. Basic residues predominate over residues 896–906 (KKYKQCHSKVE).

Belongs to the SecA family. Monomer and homodimer. Part of the essential Sec protein translocation apparatus which comprises SecA, SecYEG and auxiliary proteins SecDF-YajC and YidC. Zn(2+) serves as cofactor.

The protein localises to the cell inner membrane. Its subcellular location is the cytoplasm. The catalysed reaction is ATP + H2O + cellular proteinSide 1 = ADP + phosphate + cellular proteinSide 2.. Functionally, part of the Sec protein translocase complex. Interacts with the SecYEG preprotein conducting channel. Has a central role in coupling the hydrolysis of ATP to the transfer of proteins into and across the cell membrane, serving both as a receptor for the preprotein-SecB complex and as an ATP-driven molecular motor driving the stepwise translocation of polypeptide chains across the membrane. This is Protein translocase subunit SecA from Francisella tularensis subsp. tularensis (strain WY96-3418).